Consider the following 123-residue polypeptide: uncharacterized protein (123 aa).

Over residues 1–12 the composition is skewed to polar residues; it reads MALNNVSLSSGD. Disordered stretches follow at residues 1-25 and 53-91; these read MALN…SHGD and PRQA…RFSP. The segment covering 61–82 has biased composition (basic and acidic residues); that stretch reads VRAESRRVDGGGRSPREPDGRG.

This is an uncharacterized protein from Homo sapiens (Human).